Consider the following 459-residue polypeptide: GTPase Der (459 aa).

EngA-type G domains follow at residues 4-169 and 179-355; these read PLVA…PEVA and IAVA…AAHR. Residues 10-17, 57-61, 120-123, 185-192, 232-236, and 297-300 contribute to the GTP site; these read GRPNVGKS, DTGGL, NKCE, DTAGI, and NKWD. Positions 356 to 441 constitute a KH-like domain; that stretch reads KRIATSVVNE…PIRFRWRSKS (86 aa).

This sequence belongs to the TRAFAC class TrmE-Era-EngA-EngB-Septin-like GTPase superfamily. EngA (Der) GTPase family. As to quaternary structure, associates with the 50S ribosomal subunit.

GTPase that plays an essential role in the late steps of ribosome biogenesis. This chain is GTPase Der, found in Synechococcus sp. (strain JA-3-3Ab) (Cyanobacteria bacterium Yellowstone A-Prime).